Reading from the N-terminus, the 169-residue chain is Disulfide bond formation protein B (169 aa).

The Cytoplasmic segment spans residues 1–14 (MSNDTFYLKREKRF). A helical transmembrane segment spans residues 15–31 (LVLLGIICLSLIGGALY). Residues 32–49 (MQIALGEAPCPLCILQRY) are Periplasmic-facing. The cysteines at positions 41 and 44 are disulfide-linked. The helical transmembrane segment at 50 to 64 (ALLFIAIFAFIGAAM) threads the bilayer. The Cytoplasmic segment spans residues 65-71 (NGRRGVT). A helical transmembrane segment spans residues 72–89 (VFEALVTLSALCGIAAAG). Over 90–144 (RHAWILAHPSDSCGIDILQPIVDGLPLATLFPTGFQVSGFCTTPYPPVLGLSLAQ) the chain is Periplasmic. Cys-102 and Cys-130 are disulfide-bonded. The helical transmembrane segment at 145–163 (WALTAFVLTAILVPACIIR) threads the bilayer. Residues 164–169 (NRRKPY) are Cytoplasmic-facing.

Belongs to the DsbB family.

The protein localises to the cell inner membrane. Required for disulfide bond formation in some periplasmic proteins. Acts by oxidizing the DsbA protein. The chain is Disulfide bond formation protein B from Pseudomonas syringae pv. tomato (strain ATCC BAA-871 / DC3000).